The primary structure comprises 297 residues: 4-hydroxy-tetrahydrodipicolinate synthase (297 aa).

Thr47 serves as a coordination point for pyruvate. Residue Tyr136 is the Proton donor/acceptor of the active site. Lys165 acts as the Schiff-base intermediate with substrate in catalysis. Position 206 (Ile206) interacts with pyruvate.

It belongs to the DapA family. As to quaternary structure, homotetramer; dimer of dimers.

It is found in the cytoplasm. The enzyme catalyses L-aspartate 4-semialdehyde + pyruvate = (2S,4S)-4-hydroxy-2,3,4,5-tetrahydrodipicolinate + H2O + H(+). Its pathway is amino-acid biosynthesis; L-lysine biosynthesis via DAP pathway; (S)-tetrahydrodipicolinate from L-aspartate: step 3/4. Its function is as follows. Catalyzes the condensation of (S)-aspartate-beta-semialdehyde [(S)-ASA] and pyruvate to 4-hydroxy-tetrahydrodipicolinate (HTPA). In Campylobacter curvus (strain 525.92), this protein is 4-hydroxy-tetrahydrodipicolinate synthase.